A 162-amino-acid polypeptide reads, in one-letter code: Heat shock protein beta-6 (162 aa).

An involved in stabilization of the HSPB1:HSBP6 heterodimer region spans residues 1 to 72 (MEIRVPVQPS…PTAQVPTDPG (72 aa)). S16 is modified (phosphoserine). Q31 participates in a covalent cross-link: Isoglutamyl lysine isopeptide (Gln-Lys) (interchain with K-162). The sHSP domain occupies 56 to 162 (RAPSVALPTA…ASLPSPPAAK (107 aa)). Q66 carries the deamidated glutamine modification. S157 carries the phosphoserine modification. K162 is covalently cross-linked (Isoglutamyl lysine isopeptide (Lys-Gln) (interchain with Q-31)).

This sequence belongs to the small heat shock protein (HSP20) family. As to quaternary structure, homodimer. Small heat shock proteins form high molecular mass oligomers containing variable number of monomers; these oligomers display a very flexible quaternary structure easily exchanging their subunits. Heterooligomer with HSPB1; formed through oligomerization of HSPB1:HSBP6 dimers; subunit exchange leads to formation of at least two different heterooligomeric complexes, differing in variable quantities of HSPB1 and HSPB6 homodimers in addition to HSPB1:HSPB6 heterodimers. Heterooligomer with CRYAB; large heterooligomers consist of CRYAB homodimers and HSPB5:HSPB6 heterodimers but lacking HSPB6 homodimers. Interacts with BAG3. Interacts (phosphorylated) with YWHAZ. Interacts with PDE4A and PDE4D; required for maintenance of the non-phosphorylated state of HSPB6 under basal conditions. Interacts with KDR. Interacts with PRKD1. The N-terminus is blocked. In terms of processing, phosphorylated at Ser-16 by PKA and probably PKD1K; required to protect cardiomyocytes from apoptosis. In terms of tissue distribution, widely expressed. High expression in muscle tissues.

Its subcellular location is the cytoplasm. It localises to the nucleus. The protein localises to the secreted. Its function is as follows. Small heat shock protein which functions as a molecular chaperone probably maintaining denatured proteins in a folding-competent state. Seems to have versatile functions in various biological processes. Plays a role in regulating muscle function such as smooth muscle vasorelaxation and cardiac myocyte contractility. May regulate myocardial angiogenesis implicating KDR. Overexpression mediates cardioprotection and angiogenesis after induced damage. Stabilizes monomeric YWHAZ thereby supporting YWHAZ chaperone-like activity. The sequence is that of Heat shock protein beta-6 (Hspb6) from Rattus norvegicus (Rat).